The following is a 239-amino-acid chain: Cysteine-rich venom protein (239 aa).

A signal peptide spans 1 to 18; sequence MIVFILLSLAAVLQQSVA. In terms of domain architecture, SCP spans 37 to 165; it reads VDMHNSFRRS…PYNYFYVCQY (129 aa). Disulfide bonds link Cys74–Cys152, Cys91–Cys166, Cys147–Cys163, Cys185–Cys192, Cys188–Cys197, Cys210–Cys228, and Cys219–Cys232. The region spanning 201–234 is the ShKT domain; sequence CPINNVFTNCDSLLQQSSCEDSYITTNCGASCFC.

It belongs to the CRISP family. In terms of tissue distribution, expressed by the venom gland.

Its subcellular location is the secreted. Blocks contraction of smooth muscle elicited by high potassium-induced depolarization, but does not block caffeine-stimulated contraction. May target voltage-gated calcium channels on smooth muscle. The chain is Cysteine-rich venom protein from Cerberus rynchops (Dog-faced water snake).